A 612-amino-acid chain; its full sequence is MSAVSQPQAAHAPLEKPASTAILCNTCGNVCKGEVLRVQNKHFHIRCFVCKACGCDLAEGGFFVRQGEHICTRDYQRLYGTRCFSCDCFIEGEVVSALGKTYHPDCFVCAVCRLPFPPGDRVTFNGKDCMCQKCSPPTLVGNSAHVAQGLRSCGGCGLEIKNGQALVALDKHWHLGCFKCKTCGKLLNAEYISKDGLPYCEADYHTKFGIRCDGCEKYITGRVLEAGEKHYHPSCALCVRCGQMFSEGEEMYLQGSSIWHPACRQAARTEDKSKETRTSSESIVSVPASSTSGSPSRVIYAKLGDEILDYRDLAALPKNKAIYNIDRPDMISYSPYISHSAVGDRQSYGEGDQDDRSYKQCRTSSPSSAGSVSLGHYTPTSRSPQHYSRPGSESGRSTPSLSVHSDSRPPSSTYQQAPRHFHVPDTGVKDNIYRKPPIYKQHAARRLDVEDSSFDQDSRKKTTWLLLKGDADTRTNSPDLDSQSLSLSSGADQEPLQRMPGDSLYSRFPYSKPDTLPGPRKDGLDLRNANLAPCGADPDASWGTREYKIYPYDSLIVTNRIRVKLPKDVDRTRLERHLSPEEFQEVFGMSIEEFDRLALWKRNDLKKKALLF.

4 consecutive LIM zinc-binding domains span residues Ile-22–Thr-81, Thr-81–Gly-141, Arg-151–Ile-210, and Ile-210–Glu-270. Residues Cys-83, Cys-86, His-103, Cys-106, Cys-109, Cys-112, Cys-131, and Cys-134 each contribute to the Zn(2+) site. The Zn(2+) site is built by Cys-212, Cys-215, His-232, Cys-235, Cys-238, Cys-241, His-260, and Cys-263. Residues Thr-269–Thr-278 are compositionally biased toward basic and acidic residues. Disordered regions lie at residues Thr-269–Pro-295 and Ala-341–Tyr-433. Composition is skewed to low complexity over residues Ser-279–Pro-295 and Ser-364–Ser-373. 4 positions are modified to phosphoserine: Ser-282, Ser-294, Ser-365, and Ser-368. The span at Ser-394–Gln-416 shows a compositional bias: polar residues. Ser-453 bears the Phosphoserine mark. The disordered stretch occupies residues Ala-471–Arg-520. Thr-473 carries the phosphothreonine modification. Residues Ser-477 and Ser-579 each carry the phosphoserine modification. Over residues Ser-477–Ser-489 the composition is skewed to low complexity. Residues Thr-544–Phe-612 enclose the HP domain.

As to quaternary structure, interacts with F-actin and ABRA.

The protein localises to the cytoplasm. Functionally, may act as scaffold protein. May stimulate ABRA activity and ABRA-dependent SRF transcriptional activity. In Rattus norvegicus (Rat), this protein is Actin-binding LIM protein 2 (Ablim2).